A 572-amino-acid polypeptide reads, in one-letter code: Beta-fructofuranosidase, insoluble isoenzyme CWINV5 (572 aa).

The signal sequence occupies residues 1-23 (MANIVWCNIAMFLLVSLFLTDDA). Substrate-binding positions include 54-57 (WMND) and Gln73. The active site involves Asp57. The N-linked (GlcNAc...) asparagine glycan is linked to Asn84. Residue 118–119 (WS) participates in substrate binding. Residues Asn152 and Asn179 are each glycosylated (N-linked (GlcNAc...) asparagine). Substrate-binding positions include 184-185 (RD) and Glu239. N-linked (GlcNAc...) asparagine glycosylation is found at Asn333 and Asn438. An intrachain disulfide couples Cys434 to Cys481.

It belongs to the glycosyl hydrolase 32 family. In terms of tissue distribution, expressed in flowers, and, to a lower extent, in leaves.

It localises to the secreted. It is found in the extracellular space. The protein localises to the apoplast. The protein resides in the cell wall. It carries out the reaction Hydrolysis of terminal non-reducing beta-D-fructofuranoside residues in beta-D-fructofuranosides.. This chain is Beta-fructofuranosidase, insoluble isoenzyme CWINV5 (CWINV5), found in Arabidopsis thaliana (Mouse-ear cress).